The primary structure comprises 425 residues: ADP-ribose glycohydrolase MACROD2 (425 aa).

The Macro domain occupies 59 to 240 (QETSQVKKSL…IYKKKMNEFF (182 aa)). Substrate is bound by residues 77-79 (GDI), 90-92 (AAN), and 97-102 (GGGGVD). Lysine 170 participates in a covalent cross-link: Glycyl lysine isopeptide (Lys-Gly) (interchain with G-Cter in ubiquitin). Residues 185-191 (ISTGIYG) and phenylalanine 224 contribute to the substrate site. Positions 243-425 (DDNNEEEEDV…EAKEQRNGTK (183 aa)) are disordered. Residues 244 to 262 (DNNEEEEDVEMKEDSDENG) show a composition bias toward acidic residues. Over residues 302–343 (EDFAKDENITKGGEVTDHSVRDQDHPDGQENDSTKNEIKIET) the composition is skewed to basic and acidic residues. Polar residues predominate over residues 344-360 (ESQSSYMETEELSSNQE). Basic and acidic residues-rich tracts occupy residues 381 to 391 (EGEKAPGEDTP) and 415 to 425 (DEAKEQRNGTK).

This sequence belongs to the MacroD-type family. MacroD1/2-like subfamily. Interacts with ADP-ribosylated PARP1.

It localises to the nucleus. The catalysed reaction is 2''-O-acetyl-ADP-D-ribose + H2O = ADP-D-ribose + acetate + H(+). It catalyses the reaction 4-O-(ADP-D-ribosyl)-L-aspartyl-[protein] + H2O = L-aspartyl-[protein] + ADP-D-ribose + H(+). The enzyme catalyses 5-O-(ADP-D-ribosyl)-L-glutamyl-[protein] + H2O = L-glutamyl-[protein] + ADP-D-ribose + H(+). It carries out the reaction alpha-NAD(+) + H2O = ADP-D-ribose + nicotinamide + H(+). Subject to product inhibition by ADP-ribose. Removes ADP-ribose from aspartate and glutamate residues in proteins bearing a single ADP-ribose moiety. Inactive towards proteins bearing poly-ADP-ribose. Deacetylates O-acetyl-ADP ribose, a signaling molecule generated by the deacetylation of acetylated lysine residues in histones and other proteins. The protein is ADP-ribose glycohydrolase MACROD2 of Homo sapiens (Human).